The sequence spans 316 residues: Transaldolase (316 aa).

Catalysis depends on Lys-132, which acts as the Schiff-base intermediate with substrate.

It belongs to the transaldolase family. Type 1 subfamily. As to quaternary structure, homodimer.

The protein localises to the cytoplasm. The enzyme catalyses D-sedoheptulose 7-phosphate + D-glyceraldehyde 3-phosphate = D-erythrose 4-phosphate + beta-D-fructose 6-phosphate. It functions in the pathway carbohydrate degradation; pentose phosphate pathway; D-glyceraldehyde 3-phosphate and beta-D-fructose 6-phosphate from D-ribose 5-phosphate and D-xylulose 5-phosphate (non-oxidative stage): step 2/3. Transaldolase is important for the balance of metabolites in the pentose-phosphate pathway. The polypeptide is Transaldolase (Marinomonas sp. (strain MWYL1)).